A 131-amino-acid chain; its full sequence is D-ribose pyranase (131 aa).

His20 functions as the Proton donor in the catalytic mechanism. Residues Asp28, His98, and 120-122 (YAN) each bind substrate.

This sequence belongs to the RbsD / FucU family. RbsD subfamily. As to quaternary structure, homodecamer.

It is found in the cytoplasm. The enzyme catalyses beta-D-ribopyranose = beta-D-ribofuranose. Its pathway is carbohydrate metabolism; D-ribose degradation; D-ribose 5-phosphate from beta-D-ribopyranose: step 1/2. Catalyzes the interconversion of beta-pyran and beta-furan forms of D-ribose. This chain is D-ribose pyranase, found in Clostridium novyi (strain NT).